We begin with the raw amino-acid sequence, 397 residues long: Lysophospholipid transporter LplT (397 aa).

11 consecutive transmembrane segments (helical) span residues 21–41 (SAQFLSAFGDNALLFATLALL), 53–73 (ILQMVFVGAYILFAPFVGQVA), 91–111 (LGAASICFGFNPFIGYTLVGI), 139–159 (LMESSTIAAILLGSVAGGVLA), 164–184 (LAALGICAVVYAGAVVANLFI), 229–249 (WGAGVTLRFLLVLWVPTALGI), 257–277 (YLNAMVAVGIVVGAGAAAKLV), 281–301 (TVRRCMPAGILIGVGVLFFSL), 304–324 (ALLPAYGLLILIGILGGFFIV), 344–364 (IAVQNLGENTAMLLMLGLYSL), and 372–392 (VVGIGVGFGALFALAITGLWI).

Belongs to the major facilitator superfamily. LplT (TC 2.A.1.42) family.

It is found in the cell inner membrane. Its function is as follows. Catalyzes the facilitated diffusion of 2-acyl-glycero-3-phosphoethanolamine (2-acyl-GPE) into the cell. This chain is Lysophospholipid transporter LplT, found in Enterobacter sp. (strain 638).